A 126-amino-acid chain; its full sequence is Ribosome-binding factor A (126 aa).

The protein belongs to the RbfA family. Monomer. Binds 30S ribosomal subunits, but not 50S ribosomal subunits or 70S ribosomes.

It localises to the cytoplasm. In terms of biological role, one of several proteins that assist in the late maturation steps of the functional core of the 30S ribosomal subunit. Associates with free 30S ribosomal subunits (but not with 30S subunits that are part of 70S ribosomes or polysomes). Required for efficient processing of 16S rRNA. May interact with the 5'-terminal helix region of 16S rRNA. This chain is Ribosome-binding factor A, found in Haemophilus ducreyi (strain 35000HP / ATCC 700724).